The sequence spans 187 residues: Elongation factor P (187 aa).

Belongs to the elongation factor P family.

Its subcellular location is the cytoplasm. Its pathway is protein biosynthesis; polypeptide chain elongation. Involved in peptide bond synthesis. Stimulates efficient translation and peptide-bond synthesis on native or reconstituted 70S ribosomes in vitro. Probably functions indirectly by altering the affinity of the ribosome for aminoacyl-tRNA, thus increasing their reactivity as acceptors for peptidyl transferase. The polypeptide is Elongation factor P (Corynebacterium efficiens (strain DSM 44549 / YS-314 / AJ 12310 / JCM 11189 / NBRC 100395)).